Here is a 1191-residue protein sequence, read N- to C-terminus: Putative glycoside hydrolase 22789 (1191 aa).

Low complexity predominate over residues 173–187; that stretch reads PSSSGASSVLPSPSA. Residues 173–221 are disordered; sequence PSSSGASSVLPSPSAHTPDAATDANHLPNPDPASGRQELTRAGRPARKK.

This sequence belongs to the glycoside hydrolase-like 3 (GHL3) family.

The polypeptide is Putative glycoside hydrolase 22789 (Monosiga brevicollis (Choanoflagellate)).